The following is a 363-amino-acid chain: S-adenosylmethionine:tRNA ribosyltransferase-isomerase (363 aa).

This sequence belongs to the QueA family. In terms of assembly, monomer.

It is found in the cytoplasm. The enzyme catalyses 7-aminomethyl-7-carbaguanosine(34) in tRNA + S-adenosyl-L-methionine = epoxyqueuosine(34) in tRNA + adenine + L-methionine + 2 H(+). The protein operates within tRNA modification; tRNA-queuosine biosynthesis. Functionally, transfers and isomerizes the ribose moiety from AdoMet to the 7-aminomethyl group of 7-deazaguanine (preQ1-tRNA) to give epoxyqueuosine (oQ-tRNA). The protein is S-adenosylmethionine:tRNA ribosyltransferase-isomerase of Brucella abortus (strain S19).